The following is a 1902-amino-acid chain: Plexin-B3 (1902 aa).

Positions 1-34 (MLTDFLQAPVMAPWSPFSLHLLLLFLLLLPLTRA) are cleaved as a signal peptide. The 427-residue stretch at 35-461 (HRFSVPNASF…TAQQVDRILV (427 aa)) folds into the Sema domain. Topologically, residues 35-1245 (HRFSVPNASF…MISTFPVEAQ (1211 aa)) are extracellular. Residue Asn41 is glycosylated (N-linked (GlcNAc...) asparagine). Cystine bridges form between Cys88-Cys97 and Cys122-Cys130. Residue Asn221 is glycosylated (N-linked (GlcNAc...) asparagine). 3 disulfides stabilise this stretch: Cys257–Cys360, Cys273–Cys305, and Cys323–Cys347. The interval 353–372 (DSPESYPCGDEHTPSPIAGR) is disordered. Residues Asn416 and Asn469 are each glycosylated (N-linked (GlcNAc...) asparagine). In terms of domain architecture, PSI 1 spans 463–515 (ACPQFPNCTTCLQARDPLCGWCILQGRCTRRAECGRAVQPNQWLWSYEDNHCL). Intrachain disulfides connect Cys464/Cys481, Cys470/Cys514, Cys473/Cys490, Cys484/Cys496, and Cys551/Cys569. PSI domains are found at residues 609–671 (DCSA…EACP) and 776–822 (DCAM…QLCP). Residues Asn791, Asn889, Asn946, Asn1090, and Asn1207 are each glycosylated (N-linked (GlcNAc...) asparagine). 3 consecutive IPT/TIG domains span residues 824–913 (PSID…HFTY), 915–1001 (DPVL…FRYT), and 1003–1134 (NPQL…FLYQ). A helical membrane pass occupies residues 1246 to 1266 (VGLGMGAAMLIAAVLLLTLMY). Over 1267 to 1902 (RHKSKQALRD…ALVEYKVTDL (636 aa)) the chain is Cytoplasmic.

This sequence belongs to the plexin family. In terms of assembly, binds MET and MST1R. Interacts with RIT2/RIN. Interacts (via cytoplasmic domain) with FSCN1 and RAC1. May form homodimers (via Sema domain). Interacts (via cytoplasmic domain) with ARHGDIA. As to expression, expressed in glioma cells (at protein level). Expressed in glioma cells and oligodendrocyte precursor cells.

It is found in the cell membrane. Receptor for SEMA5A that plays a role in axon guidance, invasive growth and cell migration. Stimulates neurite outgrowth and mediates Ca(2+)/Mg(2+)-dependent cell aggregation. In glioma cells, SEMA5A stimulation of PLXNB3 results in the disassembly of F-actin stress fibers, disruption of focal adhesions and cellular collapse as well as inhibition of cell migration and invasion through ARHGDIA-mediated inactivation of RAC1. This is Plexin-B3 (Plxnb3) from Rattus norvegicus (Rat).